We begin with the raw amino-acid sequence, 367 residues long: Cystinosin (367 aa).

An N-terminal signal peptide occupies residues 1-22 (MIRNWLTIFILFPLKLVEKCES). Topologically, residues 23-125 (SVSLTVPPVV…LVIRSSAISI (103 aa)) are lumenal. N-linked (GlcNAc...) (high mannose) asparagine glycosylation is found at Asn36, Asn41, and Asn51. Asn66 is a glycosylation site (N-linked (GlcNAc...) asparagine). Residues Asn84, Asn104, and Asn107 are each glycosylated (N-linked (GlcNAc...) (high mannose) asparagine). The PQ-loop 1 domain occupies 123–189 (ISIINQVIGW…LLWVPYIKEQ (67 aa)). The chain crosses the membrane as a helical span at residues 126–150 (INQVIGWIYFVAWSISFYPQVIMNW). Topologically, residues 151–159 (RRKSVIGLS) are cytoplasmic. The helical transmembrane segment at 160–179 (FDFVALNLTGFVAYSVFNIG) threads the bilayer. L-cystine is bound at residue Asn166. Residues 180–202 (LLWVPYIKEQFLLKYPNGVNPVN) are Lumenal-facing. A helical membrane pass occupies residues 203–225 (SNDVFFSLHAVVLTLIIIVQCCL). Residue Asp205 coordinates H(+). Topologically, residues 226-234 (YERGGQRVS) are cytoplasmic. A helical transmembrane segment spans residues 235–257 (WPAIGFLVLAWLFAFVTMIVAAV). Residues 258 to 263 (GVTTWL) are Lumenal-facing. One can recognise a PQ-loop 2 domain in the interval 263–328 (LQFLFCFSYI…QSYNNDQWTL (66 aa)). A helical transmembrane segment spans residues 264 to 289 (QFLFCFSYIKLAVTLVKYFPQAYMNF). L-cystine is bound by residues Lys273, Lys280, and Tyr281. At 290–298 (YYKSTEGWS) the chain is on the cytoplasmic side. Residues 299–308 (IGNVLLDFTG) traverse the membrane as a helical segment. 2 residues coordinate L-cystine: Asn301 and Asp305. Asp305 lines the H(+) pocket. The Lumenal portion of the chain corresponds to 309–331 (GSFSLLQMFLQSYNNDQWTLIFG). The chain crosses the membrane as a helical span at residues 332-354 (DPTKFGLGVFSIVFDVVFFIQHF). Asp346 provides a ligand contact to H(+). Over 355–367 (CLYRKRPGYDQLN) the chain is Cytoplasmic. A Lysosomal targeting motif motif is present at residues 362–366 (GYDQL).

This sequence belongs to the cystinosin family. Interacts with components of the V-ATPase complex. Interacts with components of the Ragulator complex. Interacts with RRAGA/RagA and RRAGC/RagC. Interacts with AP-3 complex subunit mu (AP3M1 or AP3M2). Strongly expressed in pancreas, kidney (adult and fetal), skeletal muscle, melanocytes and keratinocytes. Expressed at lower levels in placenta and heart. Weakly expressed in lung, liver and brain (adult and fetal). In terms of tissue distribution, represents 5-20 % of CTNS transcripts, with the exception of the testis that expresses both isoforms in equal proportions.

It localises to the lysosome membrane. The protein localises to the melanosome membrane. It is found in the cell membrane. The catalysed reaction is L-cystine(out) + H(+)(out) = L-cystine(in) + H(+)(in). Switches between a lumen- and a cytosol-open conformation: pH induces conformational changes and shifts the equilibrium to facilitate the transition between the lumen- and cytosol-open conformation, thereby promoting cystine transport. Protonation of specific aspartate residues (Asp-205, Asp-305 and Asp-346) favors the cytosol-open conformation. In terms of biological role, cystine/H(+) symporter that mediates export of cystine, the oxidized dimer of cysteine, from lysosomes. Plays an important role in melanin synthesis by catalyzing cystine export from melanosomes, possibly by inhibiting pheomelanin synthesis. In addition to cystine export, also acts as a positive regulator of mTORC1 signaling in kidney proximal tubular cells, via interactions with components of the v-ATPase and Ragulator complexes. Also involved in small GTPase-regulated vesicle trafficking and lysosomal localization of LAMP2A, independently of cystine transporter activity. The sequence is that of Cystinosin from Homo sapiens (Human).